The primary structure comprises 582 residues: DNA polymerase IV (582 aa).

Residues 127-161 are disordered; the sequence is NADDGQSSTDKESEISTDVESERNDDSNNKDMIQA. The span at 135 to 155 shows a compositional bias: basic and acidic residues; it reads TDKESEISTDVESERNDDSNN. Residues 360-369 are involved in ssDNA binding; the sequence is RGYSKCGDID. Positions 367, 369, and 502 each coordinate Mg(2+).

The protein belongs to the DNA polymerase type-X family. In terms of assembly, interacts with DNL4 subunit of the DNL4-LIF1 complex. Mg(2+) serves as cofactor.

The protein resides in the nucleus. The enzyme catalyses DNA(n) + a 2'-deoxyribonucleoside 5'-triphosphate = DNA(n+1) + diphosphate. Its activity is regulated as follows. Stimulated by the interaction with the DNL4-LIF1 complex. Functionally, repair polymerase. Involved in gap-filling in DNA nonhomologous end joining (NHEJ) required for double-strand break repair. Seems to conduct DNA synthesis in a stepwise distributive fashion rather than in a processive fashion as for other DNA polymerases. Preferentially acts upon short gaps formed by the alignment of linear duplexes with complementary single-strand ends. Required for filling gaps that need removal of a 5'- or 3'-terminal mismatch, however lacks nuclease activities. The sequence is that of DNA polymerase IV (POL4) from Saccharomyces cerevisiae (strain ATCC 204508 / S288c) (Baker's yeast).